An 878-amino-acid chain; its full sequence is Probable di- and tripeptidase DUG2 (878 aa).

WD repeat units lie at residues 18-57, 68-107, 235-274, 282-322, and 362-405; these read NHAF…LIHT, HTRS…IRDD, RFNQ…GQNT, DKID…IIST, and PQQG…SAVP. Histidine 520 contributes to the Zn(2+) binding site. The active site involves aspartate 522. Aspartate 553 contacts Zn(2+). Glutamate 586 serves as the catalytic Proton acceptor. Glutamate 587 is a Zn(2+) binding site. The stretch at 608 to 651 is one WD 6 repeat; sequence IDWILLSNSTWVDQEHPCLNYGLRGVINAQIKVWSDKPDGHSGL. Histidine 853 lines the Zn(2+) pocket.

This sequence belongs to the peptidase M20A family. As to quaternary structure, component of the GSH degradosomal complex composed of at least DUG1, DUG2 and DUG3. Requires Zn(2+) as cofactor.

The protein localises to the cytoplasm. It is found in the nucleus. In terms of biological role, component of the GSH degradosomal complex involved in the degradation of glutathione (GSH) and other peptides containing a gamma-glu-X bond. The chain is Probable di- and tripeptidase DUG2 (DUG2) from Saccharomyces cerevisiae (strain ATCC 204508 / S288c) (Baker's yeast).